Reading from the N-terminus, the 1062-residue chain is Zinc finger protein swm (1062 aa).

The PWI domain maps to 7 to 75 (DKLKDWLSVV…ERLFDAIASE (69 aa)). 2 disordered regions span residues 119-145 (ADSP…QASQ) and 171-340 (KPAF…PDRV). Positions 134-145 (DSNQVKLEQASQ) are enriched in polar residues. Residues 172–182 (PAFDHKTKDSH) show a composition bias toward basic and acidic residues. Positions 197–207 (SASPPGRSSGV) are enriched in low complexity. The span at 208–220 (SGSGGGGPGGAGL) shows a compositional bias: gly residues. Positions 234–249 (SRRRRASLRSRSRSRS) are enriched in basic residues. 2 stretches are compositionally biased toward basic and acidic residues: residues 264 to 273 (RRVNEREKTQ) and 294 to 310 (RNFD…DRPR). Polar residues predominate over residues 322–340 (RSMSPERNARRNQNSPDRV). A C3H1-type zinc finger spans residues 363–391 (SHPRQRCRDFDEKGYCVRGETCPWDHGVN). The interval 416 to 463 (EIWARSGGPPPGAGQGPVPPPTQPGQTTINPFSGNVRPTTLMSGSGPS) is disordered. Residues 423 to 438 (GPPPGAGQGPVPPPTQ) show a composition bias toward pro residues. Positions 444–461 (INPFSGNVRPTTLMSGSG) are enriched in polar residues. An RRM domain is found at 561–635 (SSLELRKVPR…RFIKVFWHND (75 aa)). Disordered regions lie at residues 666–704 (NVPA…QANT), 716–741 (TTTA…LNPA), 822–847 (QDQL…KEQQ), 886–920 (SAAN…PTRV), and 1004–1062 (APVE…SWRR). Over residues 721 to 733 (GSAGGAAGAGAPG) the composition is skewed to gly residues. A compositionally biased stretch (low complexity) spans 823-840 (DQLQAQMQQQQQQQQPPV). Positions 1018–1037 (SLENPKQLIQSVSESESLLG) are enriched in polar residues. Acidic residues predominate over residues 1046-1056 (LEDEEEDEESE).

Its subcellular location is the nucleus. Functionally, negatively regulates Hedgehog (hh) protein signal in wing development. Regulates neural-specific glycosylation by binding to FucTA mRNA and facilitating its nuclear export in neural cells. This is Zinc finger protein swm from Drosophila melanogaster (Fruit fly).